Consider the following 360-residue polypeptide: Phosphoserine aminotransferase (360 aa).

Arginine 42 is an L-glutamate binding site. Pyridoxal 5'-phosphate is bound by residues tryptophan 102, threonine 152, aspartate 171, and glutamine 194. At lysine 195 the chain carries N6-(pyridoxal phosphate)lysine. Residue 237–238 coordinates pyridoxal 5'-phosphate; sequence NT.

Belongs to the class-V pyridoxal-phosphate-dependent aminotransferase family. SerC subfamily. Homodimer. The cofactor is pyridoxal 5'-phosphate.

The protein localises to the cytoplasm. It carries out the reaction O-phospho-L-serine + 2-oxoglutarate = 3-phosphooxypyruvate + L-glutamate. The enzyme catalyses 4-(phosphooxy)-L-threonine + 2-oxoglutarate = (R)-3-hydroxy-2-oxo-4-phosphooxybutanoate + L-glutamate. It functions in the pathway amino-acid biosynthesis; L-serine biosynthesis; L-serine from 3-phospho-D-glycerate: step 2/3. The protein operates within cofactor biosynthesis; pyridoxine 5'-phosphate biosynthesis; pyridoxine 5'-phosphate from D-erythrose 4-phosphate: step 3/5. In terms of biological role, catalyzes the reversible conversion of 3-phosphohydroxypyruvate to phosphoserine and of 3-hydroxy-2-oxo-4-phosphonooxybutanoate to phosphohydroxythreonine. The polypeptide is Phosphoserine aminotransferase (Coxiella burnetii (strain CbuG_Q212) (Coxiella burnetii (strain Q212))).